An 89-amino-acid chain; its full sequence is Small ribosomal subunit protein uS15 (89 aa).

Belongs to the universal ribosomal protein uS15 family. Part of the 30S ribosomal subunit. Forms a bridge to the 50S subunit in the 70S ribosome, contacting the 23S rRNA.

One of the primary rRNA binding proteins, it binds directly to 16S rRNA where it helps nucleate assembly of the platform of the 30S subunit by binding and bridging several RNA helices of the 16S rRNA. Functionally, forms an intersubunit bridge (bridge B4) with the 23S rRNA of the 50S subunit in the ribosome. The chain is Small ribosomal subunit protein uS15 from Cyanothece sp. (strain PCC 7425 / ATCC 29141).